A 316-amino-acid polypeptide reads, in one-letter code: L-lactate dehydrogenase (316 aa).

Residues 13–15 (GMI), 34–36 (FDI), Tyr-67, and 79–83 (TAGFT) each bind NAD(+). Arg-95 contributes to the substrate binding site. NAD(+) contacts are provided by residues 125 to 127 (VTN), Leu-150, and Leu-154. Residues Arg-158 and His-182 each contribute to the substrate site. NAD(+) is bound at residue His-182. The active-site Proton acceptor is His-182.

The protein belongs to the LDH/MDH superfamily. LDH family. As to quaternary structure, homotetramer.

It carries out the reaction (S)-lactate + NAD(+) = pyruvate + NADH + H(+). It participates in fermentation; pyruvate fermentation to lactate; (S)-lactate from pyruvate: step 1/1. This chain is L-lactate dehydrogenase, found in Plasmodium berghei.